The sequence spans 250 residues: 7-carboxy-7-deazaguanine synthase (250 aa).

Substrate-binding positions include 15–17 and arginine 30; that span reads VQG. In terms of domain architecture, Radical SAM core spans 21-250; the sequence is LIGLRQVFIR…PQTHRFMGQL (230 aa). Positions 34, 38, and 41 each coordinate [4Fe-4S] cluster. Mg(2+) is bound at residue threonine 43. Threonine 96 contacts substrate. Glycine 98 contacts S-adenosyl-L-methionine.

The protein belongs to the radical SAM superfamily. 7-carboxy-7-deazaguanine synthase family. In terms of assembly, homodimer. Requires [4Fe-4S] cluster as cofactor. S-adenosyl-L-methionine serves as cofactor. Mg(2+) is required as a cofactor.

It catalyses the reaction 6-carboxy-5,6,7,8-tetrahydropterin + H(+) = 7-carboxy-7-deazaguanine + NH4(+). It participates in purine metabolism; 7-cyano-7-deazaguanine biosynthesis. Its function is as follows. Catalyzes the complex heterocyclic radical-mediated conversion of 6-carboxy-5,6,7,8-tetrahydropterin (CPH4) to 7-carboxy-7-deazaguanine (CDG), a step common to the biosynthetic pathways of all 7-deazapurine-containing compounds. This Geobacter sulfurreducens (strain ATCC 51573 / DSM 12127 / PCA) protein is 7-carboxy-7-deazaguanine synthase.